Reading from the N-terminus, the 453-residue chain is Serine incorporator 1 (453 aa).

G2 carries N-myristoyl glycine lipidation. Over 2-39 (GSVLGLCSMASWIPCLCGSAPCLLCRCCPSGNNSTVTR) the chain is Cytoplasmic. Residues 40 to 60 (LIYALFLLVGVCVACVMLIPG) traverse the membrane as a helical segment. Over 61-88 (MEEQLNKIPGFCENEKGVVPCNILVGYK) the chain is Lumenal. Residues 89–109 (AVYRLCFGLAMFYLLLSLLMI) form a helical membrane-spanning segment. Residues 110–123 (KVKSSSDPRAAVHN) lie on the Cytoplasmic side of the membrane. Residues 124 to 144 (GFWFFKFAAAIAIIIGAFFIP) traverse the membrane as a helical segment. Residues 145–151 (EGTFTTV) lie on the Lumenal side of the membrane. A helical membrane pass occupies residues 152–172 (WFYVGMAGAFCFILIQLVLLI). Residues 173–197 (DFAHSWNESWVEKMEEGNSRCWYAA) are Cytoplasmic-facing. Residues 198 to 218 (LLSATALNYLLSLVAIVLFFV) form a helical membrane-spanning segment. Over 219 to 231 (YYTHPASCSENKA) the chain is Lumenal. A helical transmembrane segment spans residues 232 to 252 (FISVNMLLCIGASVMSILPKI). Residues 253–259 (QESQPRS) are Cytoplasmic-facing. Residues 260–280 (GLLQSSVITVYTMYLTWSAMT) form a helical membrane-spanning segment. Residues 281 to 309 (NEPETNCNPSLLSIIGYNTTSTVPKEGQS) are Lumenal-facing. A helical membrane pass occupies residues 310-330 (VQWWHAQGIIGLILFLLCVFY). The Cytoplasmic portion of the chain corresponds to 331–387 (SSIRTSNNSQVNKLTLTSDESTLIEDGGARSDGSLEDGDDVHRAVDNERDGVTYSYS). Position 351 is a phosphoserine (S351). Position 352 is a phosphothreonine (T352). Phosphoserine is present on residues S361 and S364. A helical membrane pass occupies residues 388–408 (FFHFMLFLASLYIMMTLTNWY). Over 409 to 426 (RYEPSREMKSQWTAVWVK) the chain is Lumenal. A helical membrane pass occupies residues 427–447 (ISSSWIGIVLYVWTLVAPLVL). The Cytoplasmic portion of the chain corresponds to 448–453 (TNRDFD).

The protein belongs to the TDE1 family. In terms of assembly, interacts with SPTLC1.

The protein resides in the endoplasmic reticulum membrane. Functionally, enhances the incorporation of serine into phosphatidylserine and sphingolipids. The chain is Serine incorporator 1 (SERINC1) from Pongo abelii (Sumatran orangutan).